Reading from the N-terminus, the 465-residue chain is Ribulose bisphosphate carboxylase large chain (465 aa).

The residue at position 4 (Lys-4) is an N6,N6,N6-trimethyllysine. Substrate-binding residues include Asn-113 and Thr-163. The active-site Proton acceptor is Lys-165. Position 167 (Lys-167) interacts with substrate. Residues Lys-191, Asp-193, and Glu-194 each coordinate Mg(2+). Lys-191 is subject to N6-carboxylysine. His-284 serves as the catalytic Proton acceptor. Positions 285, 317, and 369 each coordinate substrate.

The protein belongs to the RuBisCO large chain family. Type I subfamily. In terms of assembly, heterohexadecamer of 8 large chains and 8 small chains; disulfide-linked. The disulfide link is formed within the large subunit homodimers. Mg(2+) serves as cofactor. In terms of processing, the disulfide bond which can form in the large chain dimeric partners within the hexadecamer appears to be associated with oxidative stress and protein turnover.

It is found in the plastid. The protein resides in the chloroplast. It catalyses the reaction 2 (2R)-3-phosphoglycerate + 2 H(+) = D-ribulose 1,5-bisphosphate + CO2 + H2O. The catalysed reaction is D-ribulose 1,5-bisphosphate + O2 = 2-phosphoglycolate + (2R)-3-phosphoglycerate + 2 H(+). RuBisCO catalyzes two reactions: the carboxylation of D-ribulose 1,5-bisphosphate, the primary event in carbon dioxide fixation, as well as the oxidative fragmentation of the pentose substrate in the photorespiration process. Both reactions occur simultaneously and in competition at the same active site. The protein is Ribulose bisphosphate carboxylase large chain of Nepenthes alata (Winged pitcher plant).